The following is a 315-amino-acid chain: Protein-export membrane protein SecF (315 aa).

Helical transmembrane passes span methionine 35–proline 55, glutamine 152–phenylalanine 172, isoleucine 181–isoleucine 201, threonine 205–leucine 225, leucine 242–leucine 264, and leucine 282–alanine 302.

The protein belongs to the SecD/SecF family. SecF subfamily. In terms of assembly, part of the protein translocation apparatus. Forms a complex with SecD.

It localises to the cell membrane. In terms of biological role, involved in protein export. The chain is Protein-export membrane protein SecF from Thermococcus gammatolerans (strain DSM 15229 / JCM 11827 / EJ3).